The sequence spans 318 residues: Acetyl-coenzyme A carboxylase carboxyl transferase subunit alpha (318 aa).

Residues 38–292 (KLEKRLAKLE…NKTITKSLHA (255 aa)) enclose the CoA carboxyltransferase C-terminal domain.

It belongs to the AccA family. In terms of assembly, acetyl-CoA carboxylase is a heterohexamer composed of biotin carboxyl carrier protein (AccB), biotin carboxylase (AccC) and two subunits each of ACCase subunit alpha (AccA) and ACCase subunit beta (AccD).

It localises to the cytoplasm. It catalyses the reaction N(6)-carboxybiotinyl-L-lysyl-[protein] + acetyl-CoA = N(6)-biotinyl-L-lysyl-[protein] + malonyl-CoA. It participates in lipid metabolism; malonyl-CoA biosynthesis; malonyl-CoA from acetyl-CoA: step 1/1. Component of the acetyl coenzyme A carboxylase (ACC) complex. First, biotin carboxylase catalyzes the carboxylation of biotin on its carrier protein (BCCP) and then the CO(2) group is transferred by the carboxyltransferase to acetyl-CoA to form malonyl-CoA. This chain is Acetyl-coenzyme A carboxylase carboxyl transferase subunit alpha, found in Listeria welshimeri serovar 6b (strain ATCC 35897 / DSM 20650 / CCUG 15529 / CIP 8149 / NCTC 11857 / SLCC 5334 / V8).